The sequence spans 530 residues: Autoinducer-2 kinase (530 aa).

The protein belongs to the FGGY kinase family.

It is found in the cytoplasm. The enzyme catalyses (S)-4,5-dihydroxypentane-2,3-dione + ATP = (2S)-2-hydroxy-3,4-dioxopentyl phosphate + ADP + H(+). Functionally, catalyzes the phosphorylation of autoinducer-2 (AI-2) to phospho-AI-2, which subsequently inactivates the transcriptional regulator LsrR and leads to the transcription of the lsr operon. Phosphorylates the ring-open form of (S)-4,5-dihydroxypentane-2,3-dione (DPD), which is the precursor to all AI-2 signaling molecules, at the C5 position. The chain is Autoinducer-2 kinase from Yersinia pseudotuberculosis serotype O:3 (strain YPIII).